The primary structure comprises 509 residues: Steroid 17-alpha-hydroxylase/17,20 lyase (509 aa).

Residue asparagine 202 coordinates substrate. Cysteine 442 contributes to the heme binding site.

The protein belongs to the cytochrome P450 family. Heme serves as cofactor.

It is found in the endoplasmic reticulum membrane. The protein localises to the microsome membrane. The enzyme catalyses a C21-steroid + reduced [NADPH--hemoprotein reductase] + O2 = a 17alpha-hydroxy-C21-steroid + oxidized [NADPH--hemoprotein reductase] + H2O + H(+). It carries out the reaction progesterone + reduced [NADPH--hemoprotein reductase] + O2 = 17alpha-hydroxyprogesterone + oxidized [NADPH--hemoprotein reductase] + H2O + H(+). It catalyses the reaction pregnenolone + reduced [NADPH--hemoprotein reductase] + O2 = 17alpha-hydroxypregnenolone + oxidized [NADPH--hemoprotein reductase] + H2O + H(+). The catalysed reaction is 17alpha-hydroxyprogesterone + reduced [NADPH--hemoprotein reductase] + O2 = androst-4-ene-3,17-dione + acetate + oxidized [NADPH--hemoprotein reductase] + H2O + 2 H(+). The enzyme catalyses 17alpha-hydroxyprogesterone + reduced [NADPH--hemoprotein reductase] + O2 = 16alpha,17alpha-dihydroxyprogesterone + oxidized [NADPH--hemoprotein reductase] + H2O + H(+). It carries out the reaction 16alpha,17alpha-dihydroxyprogesterone + reduced [NADPH--hemoprotein reductase] + O2 = 6beta,16alpha,17alpha-trihydroxyprogesterone + oxidized [NADPH--hemoprotein reductase] + H2O + H(+). It catalyses the reaction 17alpha-hydroxypregnenolone + reduced [NADPH--hemoprotein reductase] + O2 = 3beta-hydroxyandrost-5-en-17-one + acetate + oxidized [NADPH--hemoprotein reductase] + H2O + 2 H(+). The catalysed reaction is 16alpha,17alpha-dihydroxypregnenolone + reduced [NADPH--hemoprotein reductase] + O2 = 3beta,16alpha-dihydroxy-androst-5-en-17-one + acetate + oxidized [NADPH--hemoprotein reductase] + H2O + 2 H(+). The enzyme catalyses 3beta-hydroxyandrost-5-en-17-one + reduced [NADPH--hemoprotein reductase] + O2 = 3beta,16alpha-dihydroxy-androst-5-en-17-one + oxidized [NADPH--hemoprotein reductase] + H2O + H(+). It carries out the reaction androst-4-ene-3,17-dione + reduced [NADPH--hemoprotein reductase] + O2 = 16alpha-hydroxyandrost-4-ene-3,17-dione + oxidized [NADPH--hemoprotein reductase] + H2O + H(+). It functions in the pathway steroid hormone biosynthesis. It participates in steroid biosynthesis; glucocorticoid biosynthesis. With respect to regulation, regulated predominantly by intracellular cAMP levels. The 17,20-lyase activity is stimulated by cytochrome b5, which acts as an allosteric effector increasing the Vmax of the lyase activity. In terms of biological role, a cytochrome P450 monooxygenase involved in corticoid and androgen biosynthesis. Catalyzes 17-alpha hydroxylation of C21 steroids, which is common for both pathways. A second oxidative step, required only for androgen synthesis, involves an acyl-carbon cleavage. The 17-alpha hydroxy intermediates, as part of adrenal glucocorticoids biosynthesis pathway, are precursors of cortisol. Hydroxylates steroid hormones, pregnenolone and progesterone to form 17-alpha hydroxy metabolites, followed by the cleavage of the C17-C20 bond to form C19 steroids, dehydroepiandrosterone (DHEA) and androstenedione. Has 16-alpha hydroxylase activity. Catalyzes 16-alpha hydroxylation of 17-alpha hydroxy pregnenolone, followed by the cleavage of the C17-C20 bond to form 16-alpha-hydroxy DHEA. Also 16-alpha hydroxylates androgens, relevant for estriol synthesis. Mechanistically, uses molecular oxygen inserting one oxygen atom into a substrate, and reducing the second into a water molecule, with two electrons provided by NADPH via cytochrome P450 reductase (CPR; NADPH-ferrihemoprotein reductase). The polypeptide is Steroid 17-alpha-hydroxylase/17,20 lyase (CYP17A1) (Ovis aries (Sheep)).